A 552-amino-acid chain; its full sequence is Non-structural protein NS1 (552 aa).

It belongs to the orbivirus non-structural protein NS1 family.

The polypeptide is Non-structural protein NS1 (Segment-5) (Antilocapra americana (Pronghorn)).